A 176-amino-acid chain; its full sequence is Ribosome maturation factor RimM (176 aa).

The 73-residue stretch at 100–172 folds into the PRC barrel domain; that stretch reads PDTYYDHQLV…IVEIDPPHGL (73 aa).

The protein belongs to the RimM family. In terms of assembly, binds ribosomal protein uS19.

The protein resides in the cytoplasm. An accessory protein needed during the final step in the assembly of 30S ribosomal subunit, possibly for assembly of the head region. Essential for efficient processing of 16S rRNA. May be needed both before and after RbfA during the maturation of 16S rRNA. It has affinity for free ribosomal 30S subunits but not for 70S ribosomes. This Mycobacterium bovis (strain ATCC BAA-935 / AF2122/97) protein is Ribosome maturation factor RimM.